We begin with the raw amino-acid sequence, 270 residues long: Myelin protein zero-like protein 1 (270 aa).

Positions 1–35 (MAEAVGAVTLIAAPARRRWLWSALAAMLGLLTARI) are cleaved as a signal peptide. The Ig-like V-type domain occupies 36–151 (SALEVHTPKE…DIVVRPGQIR (116 aa)). Residues 36-162 (SALEVHTPKE…HVVEIDNLLV (127 aa)) are Extracellular-facing. 2 N-linked (GlcNAc...) asparagine glycosylation sites follow: Asn50 and Asn130. A disulfide bridge links Cys58 with Cys135. The chain crosses the membrane as a helical span at residues 163-183 (FLVWVVVGTVTAVVLGLTLLI). At 184–270 (SLVLVVLYRR…SVVYADIRKD (87 aa)) the chain is on the cytoplasmic side. The interval 201-257 (TGCSTSERLSPVKQAPRKCPSDTEGLVKSPPSAGSHQGPVIYAQLDHSGGHHSGKIN) is disordered. Phosphoserine is present on residues Ser204, Ser206, Ser210, and Ser221. An ITIM motif 1 motif is present at residues 240–245 (VIYAQL). Position 242 is a phosphotyrosine (Tyr242). Phosphoserine is present on Ser261. An ITIM motif 2 motif is present at residues 262–267 (VVYADI). Position 264 is a phosphotyrosine (Tyr264).

Belongs to the myelin P0 protein family. In terms of assembly, interacts with phosphorylated PTPN11/SHP-2. In terms of processing, phosphorylated on tyrosine residues upon stimulation with pervanadate and concanavalin-A (ConA). Phosphorylation at Tyr-242 and Tyr-264 is required for interaction with PTPN11/SHP-2. Dephosphorylated by PTPN11/SHP-2 (in vitro). Post-translationally, N-glycosylated.

The protein resides in the membrane. Cell surface receptor, which is involved in signal transduction processes. Recruits PTPN11/SHP-2 to the cell membrane and is a putative substrate of PTPN11/SHP-2. Is a major receptor for concanavalin-A (ConA) and is involved in cellular signaling induced by ConA, which probably includes Src family tyrosine-protein kinases. May be involved in regulation of integrin-mediated cell motility. The chain is Myelin protein zero-like protein 1 (Mpzl1) from Rattus norvegicus (Rat).